Here is a 173-residue protein sequence, read N- to C-terminus: Photosystem I assembly protein Ycf3 (173 aa).

TPR repeat units follow at residues 35 to 68, 72 to 105, and 120 to 153; these read AYVY…EESP, SETL…NSNQ, and GRTA…YPGG.

Belongs to the Ycf3 family.

Its subcellular location is the cellular thylakoid membrane. Essential for the assembly of the photosystem I (PSI) complex. May act as a chaperone-like factor to guide the assembly of the PSI subunits. In Prochlorococcus marinus (strain MIT 9313), this protein is Photosystem I assembly protein Ycf3.